Consider the following 226-residue polypeptide: MSVRLDARASRHYYDSTFERHAVKILPNEYFVTKGEDLMLSTVLGSCVAACLRDPLTGIGGMNHFMLPDGDAQSPASATMRYGAFAMEVLINELLKAGAARDRLEAKVFGGGAVLSAMQQMNIGERNGQFVLSYLKTENIPVRAQDLGDTHARRIHYFPFDGRVLVRKMAPHHAKAEEVIAHREKLAAQKAQDNSRSAPRIERFDAPKMKVEMFKRPLRRTANAES.

It belongs to the CheD family.

The catalysed reaction is L-glutaminyl-[protein] + H2O = L-glutamyl-[protein] + NH4(+). Its function is as follows. Probably deamidates glutamine residues to glutamate on methyl-accepting chemotaxis receptors (MCPs), playing an important role in chemotaxis. The sequence is that of Probable chemoreceptor glutamine deamidase CheD from Bordetella avium (strain 197N).